The following is a 418-amino-acid chain: Serine--tRNA ligase (418 aa).

226–228 (TSE) lines the L-serine pocket. Residues 257–259 (RRE) and Val273 contribute to the ATP site. An L-serine-binding site is contributed by Glu280. An ATP-binding site is contributed by 344 to 347 (ELTS). An L-serine-binding site is contributed by Thr379.

The protein belongs to the class-II aminoacyl-tRNA synthetase family. Type-1 seryl-tRNA synthetase subfamily. As to quaternary structure, homodimer. The tRNA molecule binds across the dimer.

It localises to the cytoplasm. The catalysed reaction is tRNA(Ser) + L-serine + ATP = L-seryl-tRNA(Ser) + AMP + diphosphate + H(+). It catalyses the reaction tRNA(Sec) + L-serine + ATP = L-seryl-tRNA(Sec) + AMP + diphosphate + H(+). Its pathway is aminoacyl-tRNA biosynthesis; selenocysteinyl-tRNA(Sec) biosynthesis; L-seryl-tRNA(Sec) from L-serine and tRNA(Sec): step 1/1. Its function is as follows. Catalyzes the attachment of serine to tRNA(Ser). Is also able to aminoacylate tRNA(Sec) with serine, to form the misacylated tRNA L-seryl-tRNA(Sec), which will be further converted into selenocysteinyl-tRNA(Sec). In Mycobacteroides abscessus (strain ATCC 19977 / DSM 44196 / CCUG 20993 / CIP 104536 / JCM 13569 / NCTC 13031 / TMC 1543 / L948) (Mycobacterium abscessus), this protein is Serine--tRNA ligase.